The primary structure comprises 114 residues: SOSS complex subunit C homolog (114 aa).

Positions M1–E10 are enriched in polar residues. The segment at M1 to H61 is disordered.

Belongs to the SOSS-C family.

The polypeptide is SOSS complex subunit C homolog (Nematostella vectensis (Starlet sea anemone)).